The sequence spans 200 residues: Mediator of RNA polymerase II transcription subunit 22 (200 aa).

A coiled-coil region spans residues 93–122 (SVNEAIDQRNQQLRALQEECDRKLITLRDE). Residues 167–200 (SAPLLASPETGAGPLQSAAPVHSHGGGPGPTEHT) are disordered. Residues 190 to 200 (HGGGPGPTEHT) show a composition bias toward gly residues.

The protein belongs to the Mediator complex subunit 22 family. As to quaternary structure, component of the Mediator complex, which is composed of MED1, MED4, MED6, MED7, MED8, MED9, MED10, MED11, MED12, MED13, MED13L, MED14, MED15, MED16, MED17, MED18, MED19, MED20, MED21, MED22, MED23, MED24, MED25, MED26, MED27, MED29, MED30, MED31, CCNC, CDK8 and CDC2L6/CDK11. The MED12, MED13, CCNC and CDK8 subunits form a distinct module termed the CDK8 module. Mediator containing the CDK8 module is less active than Mediator lacking this module in supporting transcriptional activation. Individual preparations of the Mediator complex lacking one or more distinct subunits have been variously termed ARC, CRSP, DRIP, PC2, SMCC and TRAP.

It localises to the nucleus. Functionally, component of the Mediator complex, a coactivator involved in the regulated transcription of nearly all RNA polymerase II-dependent genes. Mediator functions as a bridge to convey information from gene-specific regulatory proteins to the basal RNA polymerase II transcription machinery. Mediator is recruited to promoters by direct interactions with regulatory proteins and serves as a scaffold for the assembly of a functional preinitiation complex with RNA polymerase II and the general transcription factors. The sequence is that of Mediator of RNA polymerase II transcription subunit 22 (Med22) from Rattus norvegicus (Rat).